A 622-amino-acid chain; its full sequence is Low affinity potassium transport system protein Kup (622 aa).

12 helical membrane-spanning segments follow: residues 9 to 29 (LPAV…TSPL), 49 to 69 (VFGF…LKYL), 101 to 121 (VLVI…VITP), 137 to 157 (PSMD…LFII), 165 to 185 (VGKL…VLGA), 212 to 232 (AVSF…EALY), 247 to 267 (WFTV…ALLL), 279 to 299 (LLAP…ATII), 337 to 357 (IYIP…IVSF), 363 to 383 (LAAA…ILFC), 397 to 417 (AWVL…ANVV), and 419 to 439 (ILSG…IMTT).

This sequence belongs to the HAK/KUP transporter (TC 2.A.72) family.

The protein resides in the cell inner membrane. It catalyses the reaction K(+)(in) + H(+)(in) = K(+)(out) + H(+)(out). In terms of biological role, responsible for the low-affinity transport of potassium into the cell. Likely operates as a K(+):H(+) symporter. This is Low affinity potassium transport system protein Kup from Pectobacterium carotovorum subsp. carotovorum (strain PC1).